Reading from the N-terminus, the 511-residue chain is NADH-quinone oxidoreductase subunit N 1 (511 aa).

Helical transmembrane passes span 15-35 (LALPMLVLSGFAVAILLLDLV), 46-66 (ALALAGLAAATMSLAKVWQAV), 89-109 (FAIYFYLLFIVGAAVAILMSI), 120-140 (GEYHALILFATIGMMCMASGM), 142-162 (LILLFVGLELMALSTYVLVGF), 177-197 (LLLGAFSSGIFAYGLSLFYGL), 221-241 (PIALLALITTATGLLFKIAAV), 264-284 (VAVKAAGWAMLLRIFLFMLWP), 289-309 (YTPILIFVAVATMIGGNFAAL), 317-337 (LLAYSSISHVGYMLLGLVASD), 347-367 (GILVYLAVYTFMNLGAFAVIT), 393-413 (AVLLLVFLLSLAGIPPLAGFW), 426-446 (GHYTLAVVAVLFAVLGMYYYL), and 471-491 (AALWISALGTLGIGLFPEVFL).

The protein belongs to the complex I subunit 2 family. In terms of assembly, NDH-1 is composed of 14 different subunits. Subunits NuoA, H, J, K, L, M, N constitute the membrane sector of the complex.

It localises to the cell inner membrane. It catalyses the reaction a quinone + NADH + 5 H(+)(in) = a quinol + NAD(+) + 4 H(+)(out). NDH-1 shuttles electrons from NADH, via FMN and iron-sulfur (Fe-S) centers, to quinones in the respiratory chain. The immediate electron acceptor for the enzyme in this species is believed to be ubiquinone. Couples the redox reaction to proton translocation (for every two electrons transferred, four hydrogen ions are translocated across the cytoplasmic membrane), and thus conserves the redox energy in a proton gradient. The sequence is that of NADH-quinone oxidoreductase subunit N 1 from Koribacter versatilis (strain Ellin345).